We begin with the raw amino-acid sequence, 510 residues long: Solute carrier family 2, facilitated glucose transporter member 2 (510 aa).

Residues 1–10 are Cytoplasmic-facing; that stretch reads MTEDKVTGTL. The helical transmembrane segment at 11-31 threads the bilayer; sequence VLAVFTAVLSSFQFGYDIGVI. Residues 32 to 96 lie on the Extracellular side of the membrane; that stretch reads NAPQQVIITH…SASLITMFWS (65 aa). N-linked (GlcNAc...) asparagine glycosylation is present at Asn62. Residues 97–117 traverse the membrane as a helical segment; it reads LSVSSFAVGGMIASFFGGLLG. At 118–122 the chain is on the cytoplasmic side; the sequence is DKLGR. Residues 123 to 143 form a helical membrane-spanning segment; the sequence is IKALLVANILSLVGALLMGFS. The Extracellular portion of the chain corresponds to 144-157; it reads KLGPSHILIISGRG. A helical membrane pass occupies residues 158–178; the sequence is ISGLYCGLISGLIPMYIGEIA. Over 179–191 the chain is Cytoplasmic; it reads PTTLRGAIGALHQ. Gln191 is a D-glucose binding site. A helical transmembrane segment spans residues 192–212; sequence LAIVTGILISQIVGLDFILGN. The Extracellular segment spans residues 213 to 215; the sequence is HEL. Residues 216-236 form a helical membrane-spanning segment; sequence WHILLGLSAVPAILQCLLLFF. Residues 237-301 lie on the Cytoplasmic side of the membrane; that stretch reads CPESPRYLYI…LFTNASYRQP (65 aa). The chain crosses the membrane as a helical span at residues 302 to 322; it reads ILVALMLHAAQQFSGINGIFY. D-glucose-binding positions include 312 to 313 and Asn318; that span reads QQ. The Extracellular segment spans residues 323 to 336; sequence YSTSIFQTAGISQP. The helical transmembrane segment at 337 to 357 threads the bilayer; that stretch reads VYATIGVGAVNTVFTAVSVFL. Asn347 contacts D-glucose. Residues 358-365 are Cytoplasmic-facing; the sequence is VEKAGRRS. The chain crosses the membrane as a helical span at residues 366-386; the sequence is LFLIGMSGMFVCAIFMSVGLV. Residues 387 to 400 are Extracellular-facing; sequence LLSKFPWMNYVSMT. Residues 401-421 form a helical membrane-spanning segment; it reads AIFLFVSFFEIGPGPIPWFMV. 2 residues coordinate D-glucose: Glu410 and Trp418. Residues 422-431 lie on the Cytoplasmic side of the membrane; sequence AEFFSQGPRP. Residues 432–452 traverse the membrane as a helical segment; it reads AALAIAAFSNWTGNFIIALCF. Residues 453–454 lie on the Extracellular side of the membrane; sequence QY. Residues 455-475 traverse the membrane as a helical segment; that stretch reads IADFCGPYVFFLLLVWSWPLF. The Cytoplasmic portion of the chain corresponds to 476–510; sequence CSHFLKFQKPKENPLRKSQQSSERRGVQLKRQKLL. The tract at residues 490 to 510 is disordered; it reads LRKSQQSSERRGVQLKRQKLL.

The protein belongs to the major facilitator superfamily. Sugar transporter (TC 2.A.1.1) family. Glucose transporter subfamily. Post-translationally, N-glycosylated; required for stability and retention at the cell surface of pancreatic beta cells.

The protein localises to the cell membrane. The catalysed reaction is D-glucose(out) = D-glucose(in). It carries out the reaction D-fructose(out) = D-fructose(in). It catalyses the reaction L-dehydroascorbate(out) = L-dehydroascorbate(in). The enzyme catalyses D-galactose(in) = D-galactose(out). D-glucose and maltose competitively inhibit fructose transport. D-glucose, D-fructose and maltose inhibit deoxyglucose transport. Facilitative hexose transporter that mediates the transport of glucose, fructose and galactose. Likely mediates the bidirectional transfer of glucose across the plasma membrane of hepatocytes and is responsible for uptake of glucose by the beta cells; may comprise part of the glucose-sensing mechanism of the beta cell. May also participate with the Na(+)/glucose cotransporter in the transcellular transport of glucose in the small intestine and kidney. Also able to mediate the transport of dehydroascorbate. This chain is Solute carrier family 2, facilitated glucose transporter member 2, found in Bos taurus (Bovine).